The following is a 271-amino-acid chain: Co-chaperone protein DjlA (271 aa).

Topologically, residues 1 to 6 are periplasmic; the sequence is MQYWGK. The chain crosses the membrane as a helical span at residues 7–31; the sequence is IIGVAVALLMGGGFWGVVLGLLIGH. The Cytoplasmic portion of the chain corresponds to 32–271; it reads MFDKARSRKM…ELIKQQKGFK (240 aa). The 67-residue stretch at 205 to 271 folds into the J domain; sequence DACNVLGVKP…ELIKQQKGFK (67 aa).

In terms of assembly, homodimer.

The protein localises to the cell inner membrane. Its function is as follows. Regulatory DnaK co-chaperone. Direct interaction between DnaK and DjlA is needed for the induction of the wcaABCDE operon, involved in the synthesis of a colanic acid polysaccharide capsule, possibly through activation of the RcsB/RcsC phosphotransfer signaling pathway. The colanic acid capsule may help the bacterium survive conditions outside the host. The sequence is that of Co-chaperone protein DjlA from Escherichia coli O157:H7.